The sequence spans 568 residues: DNA ligase 2 (568 aa).

Residue glutamate 254 participates in ATP binding. Lysine 256 (N6-AMP-lysine intermediate) is an active-site residue. The ATP site is built by arginine 261, arginine 276, glutamate 306, phenylalanine 346, arginine 425, and lysine 431.

The protein belongs to the ATP-dependent DNA ligase family. Requires Mg(2+) as cofactor.

It catalyses the reaction ATP + (deoxyribonucleotide)n-3'-hydroxyl + 5'-phospho-(deoxyribonucleotide)m = (deoxyribonucleotide)n+m + AMP + diphosphate.. DNA ligase that seals nicks in double-stranded DNA during DNA replication, DNA recombination and DNA repair. The chain is DNA ligase 2 from Methanosarcina mazei (strain ATCC BAA-159 / DSM 3647 / Goe1 / Go1 / JCM 11833 / OCM 88) (Methanosarcina frisia).